Reading from the N-terminus, the 894-residue chain is Alanine--tRNA ligase (894 aa).

The protein belongs to the class-II aminoacyl-tRNA synthetase family.

The protein localises to the cytoplasm. The enzyme catalyses tRNA(Ala) + L-alanine + ATP = L-alanyl-tRNA(Ala) + AMP + diphosphate. Catalyzes the attachment of alanine to tRNA(Ala) in a two-step reaction: alanine is first activated by ATP to form Ala-AMP and then transferred to the acceptor end of tRNA(Ala). Also edits incorrectly charged Ser-tRNA(Ala) and Gly-tRNA(Ala) via its editing domain. The polypeptide is Alanine--tRNA ligase (alaS) (Leuconostoc citreum (strain KM20)).